We begin with the raw amino-acid sequence, 496 residues long: Probable cytosol aminopeptidase (496 aa).

Positions 266 and 271 each coordinate Mn(2+). Lys-278 is a catalytic residue. Residues Asp-289, Asp-348, and Glu-350 each coordinate Mn(2+). The active site involves Arg-352.

Belongs to the peptidase M17 family. Mn(2+) serves as cofactor.

It is found in the cytoplasm. The catalysed reaction is Release of an N-terminal amino acid, Xaa-|-Yaa-, in which Xaa is preferably Leu, but may be other amino acids including Pro although not Arg or Lys, and Yaa may be Pro. Amino acid amides and methyl esters are also readily hydrolyzed, but rates on arylamides are exceedingly low.. The enzyme catalyses Release of an N-terminal amino acid, preferentially leucine, but not glutamic or aspartic acids.. Presumably involved in the processing and regular turnover of intracellular proteins. Catalyzes the removal of unsubstituted N-terminal amino acids from various peptides. In Azotobacter vinelandii (strain DJ / ATCC BAA-1303), this protein is Probable cytosol aminopeptidase.